The primary structure comprises 258 residues: Small ribosomal subunit protein uS15m (258 aa).

A mitochondrion-targeting transit peptide spans 1-57; it reads MLRAAWRALSSVRAQAVTRAPVPALRGGSSASLLSARCGLQPPSLLRAARAYAAVQK. Residues 229–258 are disordered; it reads KAAAAAAKKEKNEGVPENPSNAVPEKTQVN.

It belongs to the universal ribosomal protein uS15 family. As to quaternary structure, component of the mitochondrial ribosome small subunit (28S) which comprises a 12S rRNA and about 30 distinct proteins. Interacts with METTL17.

Its subcellular location is the mitochondrion matrix. The protein is Small ribosomal subunit protein uS15m (Mrps15) of Mus musculus (Mouse).